A 565-amino-acid polypeptide reads, in one-letter code: NAD-dependent malic enzyme (565 aa).

Tyrosine 104 acts as the Proton donor in catalysis. Arginine 157 provides a ligand contact to NAD(+). Lysine 175 acts as the Proton acceptor in catalysis. 3 residues coordinate a divalent metal cation: glutamate 246, aspartate 247, and aspartate 270. Aspartate 270 and asparagine 418 together coordinate NAD(+).

It belongs to the malic enzymes family. Homotetramer. It depends on Mg(2+) as a cofactor. Mn(2+) is required as a cofactor.

The enzyme catalyses (S)-malate + NAD(+) = pyruvate + CO2 + NADH. It carries out the reaction oxaloacetate + H(+) = pyruvate + CO2. The protein is NAD-dependent malic enzyme of Salmonella arizonae (strain ATCC BAA-731 / CDC346-86 / RSK2980).